Consider the following 249-residue polypeptide: Ribosomal RNA small subunit methyltransferase J (249 aa).

S-adenosyl-L-methionine-binding positions include 97 to 98 (RD), 113 to 114 (ER), and Asp-167.

The protein belongs to the methyltransferase superfamily. RsmJ family.

The protein resides in the cytoplasm. It catalyses the reaction guanosine(1516) in 16S rRNA + S-adenosyl-L-methionine = N(2)-methylguanosine(1516) in 16S rRNA + S-adenosyl-L-homocysteine + H(+). In terms of biological role, specifically methylates the guanosine in position 1516 of 16S rRNA. The sequence is that of Ribosomal RNA small subunit methyltransferase J from Aeromonas salmonicida (strain A449).